Here is a 354-residue protein sequence, read N- to C-terminus: Ferrochelatase (354 aa).

Residues His-214 and Glu-295 each coordinate Fe cation.

This sequence belongs to the ferrochelatase family.

It localises to the cytoplasm. It catalyses the reaction heme b + 2 H(+) = protoporphyrin IX + Fe(2+). It participates in porphyrin-containing compound metabolism; protoheme biosynthesis; protoheme from protoporphyrin-IX: step 1/1. Catalyzes the ferrous insertion into protoporphyrin IX. This is Ferrochelatase from Burkholderia vietnamiensis (strain G4 / LMG 22486) (Burkholderia cepacia (strain R1808)).